The sequence spans 355 residues: Peptide chain release factor 1 (355 aa).

Position 233 is an N5-methylglutamine (Gln233). The disordered stretch occupies residues Glu280–Phe310.

It belongs to the prokaryotic/mitochondrial release factor family. In terms of processing, methylated by PrmC. Methylation increases the termination efficiency of RF1.

It is found in the cytoplasm. Peptide chain release factor 1 directs the termination of translation in response to the peptide chain termination codons UAG and UAA. This chain is Peptide chain release factor 1, found in Rickettsia canadensis (strain McKiel).